A 1481-amino-acid chain; its full sequence is MLFSACADTNDQSLGPNVLGCRGDFDFTVKFEQLCFSLTPAAIFILASPWRVAHLVRKPTIVGAPLLRLAKLGVLVSYASLELSQLILITVLPFGASGIDIISSALRLAAALCMVGLSYFDHSKSPRPSIFLSAYLFFTLLFDIAQARTYWLASSTRPEIAFTAIFTAALAMKIAMLLLEAQRKTKWVAWDSKDHSPEETSGIYTLGVFSWLNKLFFDGYHKTLGIRDLYPLDQNLAATHLSERFSRHINEAKRKGHEIGLMEALAKTLYVPMILPIPAKLAAIGSFFCQPLFISSLTSRLSQSEPVPANIGYGFIGASICIYSVIAISQSLYWYFQQRLLYMMRACLATAIYTKTTEARAADEDENASLTLMSIDIERIMKGSLYMHELWGNVIEVALSAWLLYNLLGVAFIAPIVVVCICVGGVSFFMRFMGDSQRNWMAGIQKRVGLTSSVIGNMKNIKISGLTSPISRFVEKLRVDELQAGSNFRLLMLTCSVFAYIPLLLSPPITFGVARRSLDATKLFTSLSYLLLMSTPLQNLLETLPQMAAAVACLGRIQKFLQGEGRDDYRIFLAGSRRDPEKPSLDQLDKSPAVAIKDGSFGWKPDKMVLNNLDVEIPRGSLTIVVGPIASGKSSLCKALLGEMPHSQGTVTIATKFSCVGYCDQTPFLSNGSIRDNIIGYSPFDAQRYAEVVDGTMLGIDFETLPEADRTNIGSNGITLSGGQKQRVSLARCLYLQSDLLIMDDVFSGLDADTEDQVFQRVFGANGILKRRQATVVLCTHSVRHIPSATHVIALSTDGTVVEQGTFGDLVANQSYIHSLGVKAPSTSQADSEKIESDDSAIEPQINLIERAPTETPEVGVNDKSRLSGDSAAYIVYMKSMGTMLPIAIFTSGLLYGFFYNFPTIWLTYWSADAVATNPSHSFGYYAAIYAVLEVCAMLSLIWLGVLLYITVLTRSGVSLHHAALRTLIHAPLRFFTTTDQGIITNLFSQDLSLIDNELPSALLNVIYMVFVGIGQAAVIASSSPYLAISYPFLFGMLYVVQKFYLRTSRQLRLLDLEAKSPLYTHFLDTSKGIVTLRAFGFVSEDRAKNAFLLDTSQRPAYLLAMIQQWLHFVLNVVVAIIAVMLTSLAVRLRSNSGFTGASLVTLMSFGEMLSGVVIYYTALETSLGAISRLKAFDKAAKTETKDGEDIVPPEEWPPRGEIILNNVSASYEYELPLFLSIRLTTNELSSNDTQPETPTLALKNLRLRIRPGEKIAICGRTGSGKSSLISLLLKLLDPIDETLDCVNIDNTPLSRIDRVTLRQRIIAIPQDIVFLPDGSTFQENLDPSNVSTAADAQAVLEAVDLWDFVRDKGGLEAGMTVSNLSQGQRQLFSLGRAVLRRRIRARSLGLGGGGSEGGILLLDEVSSSVDRETEKAMQEVIRVEFREYTVVAVSHRLDIIMDYDRVVVMEKGEIVEEGNPARLVEEPGTRFGELWSVGGN.

Transmembrane regions (helical) follow at residues 27 to 47 (FTVKFEQLCFSLTPAAIFILA), 86 to 106 (LILITVLPFGASGIDIISSAL), 130 to 150 (IFLSAYLFFTLLFDIAQARTY), 159 to 179 (EIAFTAIFTAALAMKIAMLLL), 269 to 289 (LYVPMILPIPAKLAAIGSFFC), and 308 to 328 (PANIGYGFIGASICIYSVIAI). The region spanning 281–549 (LAAIGSFFCQ…LLETLPQMAA (269 aa)) is the ABC transmembrane type-1 1 domain. N367 carries an N-linked (GlcNAc...) asparagine glycan. 3 helical membrane-spanning segments follow: residues 389–409 (ELWGNVIEVALSAWLLYNLLG), 410–430 (VAFIAPIVVVCICVGGVSFFM), and 491–511 (LMLTCSVFAYIPLLLSPPITF). The 230-residue stretch at 594 to 823 (VAIKDGSFGW…QSYIHSLGVK (230 aa)) folds into the ABC transporter 1 domain. 627 to 634 (GPIASGKS) is an ATP binding site. Residues N671 and N813 are each glycosylated (N-linked (GlcNAc...) asparagine). 6 helical membrane passes run 887 to 907 (IAIFTSGLLYGFFYNFPTIWL), 928 to 948 (AIYAVLEVCAMLSLIWLGVLL), 1001 to 1021 (SALLNVIYMVFVGIGQAAVIA), 1026 to 1046 (YLAISYPFLFGMLYVVQKFYL), 1111 to 1131 (LHFVLNVVVAIIAVMLTSLAV), and 1144 to 1164 (LVTLMSFGEMLSGVVIYYTAL). Positions 887 to 1166 (IAIFTSGLLY…VVIYYTALET (280 aa)) constitute an ABC transmembrane type-1 2 domain. Residues N1207 and N1232 are each glycosylated (N-linked (GlcNAc...) asparagine). An ABC transporter 2 domain is found at 1224–1477 (LTTNELSSND…PGTRFGELWS (254 aa)). 1260 to 1267 (GRTGSGKS) serves as a coordination point for ATP. N1330 and N1364 each carry an N-linked (GlcNAc...) asparagine glycan.

This sequence belongs to the ABC transporter superfamily. ABCC family. Conjugate transporter (TC 3.A.1.208) subfamily.

The protein resides in the membrane. In terms of biological role, ABC-type transporter; part of the gene cluster that mediates the biosynthesis of the brasilane terpene glycosides brasilane D and E. This is ABC-type transporter braE from Annulohypoxylon truncatum (Hypoxylon truncatum).